The following is a 394-amino-acid chain: Benzoate membrane transport protein (394 aa).

The next 11 membrane-spanning stretches (helical) occupy residues 16–36, 49–69, 74–94, 99–119, 139–161, 176–196, 220–240, 252–272, 301–321, 325–345, and 368–388; these read ATIA…IIFF, MISW…FLSI, PVVT…FPNI, AVAA…TGYF, LFQF…FSML, MLWV…MNPV, LALP…MAIL, IIAA…ITIV, GLFY…FSLL, LVAA…IKIA, and FLGL…YFIL.

The protein localises to the cell membrane. In terms of biological role, probably involved in the transport of benzoate. The sequence is that of Benzoate membrane transport protein (benE) from Acinetobacter baylyi (strain ATCC 33305 / BD413 / ADP1).